Here is a 259-residue protein sequence, read N- to C-terminus: Small ribosomal subunit protein uS2 (259 aa).

It belongs to the universal ribosomal protein uS2 family.

The chain is Small ribosomal subunit protein uS2 from Streptococcus pneumoniae serotype 2 (strain D39 / NCTC 7466).